Reading from the N-terminus, the 39-residue chain is Cecropin-D-like peptide (39 aa).

Hemolymph.

The protein resides in the secreted. Cecropins have lytic and antibacterial activity against several Gram-positive and Gram-negative bacteria. Has antibacterial activity against the Gram-positive bacteria M.luteus (MIC=34.4 uM), L.monocytogenes (MIC=34.4 uM), and S.lutea (MIC=34.4 uM), and the Gram-negative bacterium E.coli D31 (MIC=8.6 uM). Lacks antibacterial activity against the Gram-positive bacterium B.circulans, and the Gram-negative bacteria E.coli ATCC 25922 and S.typhimurium. Has antifungal activity against A.niger, but lacks antifungal activity against C.albicans, C.wickerhamii, F.oxysporum, P.pastoris, P.tannophilus, S.cerevisiae, T.harzianum, and Z.marxianus. This Galleria mellonella (Greater wax moth) protein is Cecropin-D-like peptide.